We begin with the raw amino-acid sequence, 181 residues long: Cyclic AMP-dependent transcription factor ATF-3 (181 aa).

Lys78 is covalently cross-linked (Glycyl lysine isopeptide (Lys-Gly) (interchain with G-Cter in SUMO2)). The bZIP domain occupies 86–149; that stretch reads DERKKRRRER…QHLIYMLNLH (64 aa). The segment at 88–110 is basic motif; that stretch reads RKKRRRERNKIAAAKCRNKKKEK. Residues 114–142 are leucine-zipper; sequence LQKESEKLESVNAELKAQIEELKNEKQHL. Thr162 carries the post-translational modification Phosphothreonine. Lys175 participates in a covalent cross-link: Glycyl lysine isopeptide (Lys-Gly) (interchain with G-Cter in SUMO2).

This sequence belongs to the bZIP family. ATF subfamily. As to quaternary structure, binds DNA as a homodimer or a heterodimer. Interacts with KAT5; promoting KAT5 autoacetylation and KAT5 deubiquitination by USP7.

Its subcellular location is the nucleus. Functionally, this protein binds the cAMP response element (CRE) (consensus: 5'-GTGACGT[AC][AG]-3'), a sequence present in many viral and cellular promoters. Represses transcription from promoters with ATF sites. It may repress transcription by stabilizing the binding of inhibitory cofactors at the promoter. Activates transcription presumably by sequestering inhibitory cofactors away from the promoters. In terms of biological role, stress-induced isoform, counteracts the transcriptional repression of isoform 1. This is Cyclic AMP-dependent transcription factor ATF-3 from Homo sapiens (Human).